Reading from the N-terminus, the 456-residue chain is Bifunctional protein GlmU (456 aa).

The interval 1–227 (MKLRVVILAA…AQEVEGANNR (227 aa)) is pyrophosphorylase. UDP-N-acetyl-alpha-D-glucosamine-binding positions include 8–11 (LAAG), Lys-22, Gln-73, 78–79 (GT), 100–102 (YGD), Gly-137, Glu-152, Asn-167, and Asn-225. Position 102 (Asp-102) interacts with Mg(2+). Position 225 (Asn-225) interacts with Mg(2+). Residues 228–248 (QQLASLERALQQRQAEELMTQ) form a linker region. The N-acetyltransferase stretch occupies residues 249–456 (GVTLIDPARF…WQRPQSKKGT (208 aa)). UDP-N-acetyl-alpha-D-glucosamine is bound by residues Arg-331 and Lys-349. His-361 (proton acceptor) is an active-site residue. UDP-N-acetyl-alpha-D-glucosamine contacts are provided by Tyr-364 and Asn-375. Residues Ala-378, 384-385 (NY), Ser-403, Ala-421, and Arg-438 each bind acetyl-CoA.

In the N-terminal section; belongs to the N-acetylglucosamine-1-phosphate uridyltransferase family. This sequence in the C-terminal section; belongs to the transferase hexapeptide repeat family. In terms of assembly, homotrimer. The cofactor is Mg(2+).

The protein localises to the cytoplasm. It catalyses the reaction alpha-D-glucosamine 1-phosphate + acetyl-CoA = N-acetyl-alpha-D-glucosamine 1-phosphate + CoA + H(+). The catalysed reaction is N-acetyl-alpha-D-glucosamine 1-phosphate + UTP + H(+) = UDP-N-acetyl-alpha-D-glucosamine + diphosphate. Its pathway is nucleotide-sugar biosynthesis; UDP-N-acetyl-alpha-D-glucosamine biosynthesis; N-acetyl-alpha-D-glucosamine 1-phosphate from alpha-D-glucosamine 6-phosphate (route II): step 2/2. The protein operates within nucleotide-sugar biosynthesis; UDP-N-acetyl-alpha-D-glucosamine biosynthesis; UDP-N-acetyl-alpha-D-glucosamine from N-acetyl-alpha-D-glucosamine 1-phosphate: step 1/1. It participates in bacterial outer membrane biogenesis; LPS lipid A biosynthesis. In terms of biological role, catalyzes the last two sequential reactions in the de novo biosynthetic pathway for UDP-N-acetylglucosamine (UDP-GlcNAc). The C-terminal domain catalyzes the transfer of acetyl group from acetyl coenzyme A to glucosamine-1-phosphate (GlcN-1-P) to produce N-acetylglucosamine-1-phosphate (GlcNAc-1-P), which is converted into UDP-GlcNAc by the transfer of uridine 5-monophosphate (from uridine 5-triphosphate), a reaction catalyzed by the N-terminal domain. In Idiomarina loihiensis (strain ATCC BAA-735 / DSM 15497 / L2-TR), this protein is Bifunctional protein GlmU.